An 807-amino-acid polypeptide reads, in one-letter code: Ribosome-releasing factor 2, mitochondrial (807 aa).

Residues Met-1–Tyr-18 constitute a mitochondrion transit peptide. One can recognise a tr-type G domain in the interval Ser-27–Leu-315. Residues Ala-36 to Thr-43, Asp-100 to His-104, and Asn-154 to Asp-157 each bind GTP.

Belongs to the TRAFAC class translation factor GTPase superfamily. Classic translation factor GTPase family. EF-G/EF-2 subfamily.

The protein resides in the mitochondrion. In terms of biological role, mitochondrial GTPase that mediates the disassembly of ribosomes from messenger RNA at the termination of mitochondrial protein biosynthesis. Not involved in the GTP-dependent ribosomal translocation step during translation elongation. The chain is Ribosome-releasing factor 2, mitochondrial from Candida dubliniensis (strain CD36 / ATCC MYA-646 / CBS 7987 / NCPF 3949 / NRRL Y-17841) (Yeast).